The following is a 121-amino-acid chain: Protein FAM241B (121 aa).

The disordered stretch occupies residues 12 to 58 (QDDDPRVRTTTQPPRGSIPRQSFFNRGHGAPPGGPGPRQQQAGARLG). The span at 19 to 35 (RTTTQPPRGSIPRQSFF) shows a compositional bias: polar residues. Ser-33 bears the Phosphoserine mark. Residues 48 to 58 (PRQQQAGARLG) show a composition bias toward low complexity. Ser-62 carries the phosphoserine modification. Residues 92 to 112 (ILLLFLLMMLGVRGLLLVGLV) form a helical membrane-spanning segment.

This sequence belongs to the FAM241 family.

The protein localises to the membrane. Functionally, may play a role in lysosome homeostasis. The polypeptide is Protein FAM241B (Homo sapiens (Human)).